A 305-amino-acid chain; its full sequence is Putative monooxygenase p33MONOX (305 aa).

The interval 37-56 is disordered; sequence LEDPAPMTPPPSDMGSVPWK. Residue T44 is modified to Phosphothreonine. A Flavin-containing monooxygenase motif motif is present at residues 67-77; that stretch reads LAKVEEGEASL. 2 disordered regions span residues 158–236 and 259–305; these read QSGE…KYDS and QANR…PTGF. Low complexity predominate over residues 169-183; sequence PASAQSTPSTTPHSS. Phosphothreonine is present on T175. Phosphoserine occurs at positions 182 and 183. Polar residues predominate over residues 193-210; it reads TSGSSTALPGPNPSTMDS.

The protein belongs to the P33MONOX family. Interacts with NELFB, NOL12 and PRNP. In terms of tissue distribution, down-regulated in the occipital lobe of an early stage Alzheimer disease patients.

It localises to the cytoplasm. Functionally, potential NADPH-dependent oxidoreductase. May be involved in the regulation of neuronal survival, differentiation and axonal outgrowth. In Homo sapiens (Human), this protein is Putative monooxygenase p33MONOX (KIAA1191).